Consider the following 428-residue polypeptide: Light-independent protochlorophyllide reductase subunit N (428 aa).

[4Fe-4S] cluster contacts are provided by cysteine 16, cysteine 41, and cysteine 102.

The protein belongs to the BchN/ChlN family. In terms of assembly, protochlorophyllide reductase is composed of three subunits; ChlL, ChlN and ChlB. Forms a heterotetramer of two ChlB and two ChlN subunits. It depends on [4Fe-4S] cluster as a cofactor.

It carries out the reaction chlorophyllide a + oxidized 2[4Fe-4S]-[ferredoxin] + 2 ADP + 2 phosphate = protochlorophyllide a + reduced 2[4Fe-4S]-[ferredoxin] + 2 ATP + 2 H2O. The protein operates within porphyrin-containing compound metabolism; chlorophyll biosynthesis (light-independent). Component of the dark-operative protochlorophyllide reductase (DPOR) that uses Mg-ATP and reduced ferredoxin to reduce ring D of protochlorophyllide (Pchlide) to form chlorophyllide a (Chlide). This reaction is light-independent. The NB-protein (ChlN-ChlB) is the catalytic component of the complex. This Synechococcus sp. (strain CC9311) protein is Light-independent protochlorophyllide reductase subunit N.